We begin with the raw amino-acid sequence, 393 residues long: Ig gamma-1 chain C region, membrane-bound form (393 aa).

A CH1 region spans residues 1 to 97 (AKTTPPSVYP…ASSTKVDKKI (97 aa)). The cysteines at positions 27 and 82 are disulfide-linked. Residues 98–110 (VPRDCGCKPCICT) are hinge. A CH2 region spans residues 111–217 (VPEVSSVFIF…PIEKTISKTK (107 aa)). 2 cysteine pairs are disulfide-bonded: C138/C198 and C244/C302. The N-linked (GlcNAc...) asparagine glycan is linked to N174. A CH3 region spans residues 218–324 (GRPKAPQVYT…EKSLSHSPGL (107 aa)). A helical transmembrane segment spans residues 340 to 357 (GLWTTITIFISLFLLSVC). At 358–393 (YSAAVTLFKVKWIFSSVVELKQTLVPEYKNMIGQAP) the chain is on the cytoplasmic side.

It localises to the cell membrane. The protein is Ig gamma-1 chain C region, membrane-bound form (Ighg1) of Mus musculus (Mouse).